Consider the following 505-residue polypeptide: Lysine--tRNA ligase (505 aa).

Glu415 and Glu422 together coordinate Mg(2+).

It belongs to the class-II aminoacyl-tRNA synthetase family. In terms of assembly, homodimer. Mg(2+) serves as cofactor.

Its subcellular location is the cytoplasm. The catalysed reaction is tRNA(Lys) + L-lysine + ATP = L-lysyl-tRNA(Lys) + AMP + diphosphate. The chain is Lysine--tRNA ligase from Serratia proteamaculans (strain 568).